The chain runs to 320 residues: Ferrochelatase (320 aa).

His194 and Glu275 together coordinate Fe cation.

This sequence belongs to the ferrochelatase family. Monomer.

The protein localises to the cytoplasm. It catalyses the reaction heme b + 2 H(+) = protoporphyrin IX + Fe(2+). Its pathway is porphyrin-containing compound metabolism; protoheme biosynthesis; protoheme from protoporphyrin-IX: step 1/1. Functionally, catalyzes the ferrous insertion into protoporphyrin IX. The polypeptide is Ferrochelatase (Shigella sonnei (strain Ss046)).